The chain runs to 864 residues: Alanine--tRNA ligase (864 aa).

H534, H538, C639, and H643 together coordinate Zn(2+).

Belongs to the class-II aminoacyl-tRNA synthetase family. Requires Zn(2+) as cofactor.

It localises to the cytoplasm. The catalysed reaction is tRNA(Ala) + L-alanine + ATP = L-alanyl-tRNA(Ala) + AMP + diphosphate. In terms of biological role, catalyzes the attachment of alanine to tRNA(Ala) in a two-step reaction: alanine is first activated by ATP to form Ala-AMP and then transferred to the acceptor end of tRNA(Ala). Also edits incorrectly charged Ser-tRNA(Ala) and Gly-tRNA(Ala) via its editing domain. The polypeptide is Alanine--tRNA ligase (Aster yellows witches'-broom phytoplasma (strain AYWB)).